The following is a 490-amino-acid chain: MDRTNIENFLSRLKDLRALVIGDLMLDEYLWGRTERISPEAPVQVVDVVREDLRLGGAGNVINNLVTLGCQVHVASVLGEGHDGLLLRRRLEEKQVGIEGLQFDAKRTTSRKTRILASGQQMMRFDRESRCPIDATQEAVLAEFVSNSADRFDVILVSDYLKGVLTEDLLQSVIAVGKQKGIPVVIDPKGNDYAKYRGATLLTPNRKETEVASGISIVDEESLRLAARTLMQRIDLETLMVTRSEEGISIFFRNGEEVHLPTQAREVYDVTGAGDTVLSLVGLGLAGGLPVSEAAALANIGAGIVVGKVGTSTVNVEELHEAMAHHALEYDSKIRLRESLRDVLEVERRRGKTVVFTNGCFDLLHVGHVKYLQKARRLGDLLVLGLNSDASIRRLKGPSRPLISEQERAHILAALSCIDYVVVFDEDTPLELIDTLRPDILVKGGDYTPETVVGKDLVESYGGRVELIDLVDGRSTTNIIERILDRYEQG.

The tract at residues 1 to 330 is ribokinase; the sequence is MDRTNIENFL…EAMAHHALEY (330 aa). Residue 205 to 208 coordinates ATP; the sequence is NRKE. The active site involves D275. Positions 356 to 490 are cytidylyltransferase; it reads FTNGCFDLLH…ERILDRYEQG (135 aa).

In the N-terminal section; belongs to the carbohydrate kinase PfkB family. The protein in the C-terminal section; belongs to the cytidylyltransferase family. Homodimer.

It catalyses the reaction D-glycero-beta-D-manno-heptose 7-phosphate + ATP = D-glycero-beta-D-manno-heptose 1,7-bisphosphate + ADP + H(+). The catalysed reaction is D-glycero-beta-D-manno-heptose 1-phosphate + ATP + H(+) = ADP-D-glycero-beta-D-manno-heptose + diphosphate. It functions in the pathway nucleotide-sugar biosynthesis; ADP-L-glycero-beta-D-manno-heptose biosynthesis; ADP-L-glycero-beta-D-manno-heptose from D-glycero-beta-D-manno-heptose 7-phosphate: step 1/4. It participates in nucleotide-sugar biosynthesis; ADP-L-glycero-beta-D-manno-heptose biosynthesis; ADP-L-glycero-beta-D-manno-heptose from D-glycero-beta-D-manno-heptose 7-phosphate: step 3/4. Its function is as follows. Catalyzes the phosphorylation of D-glycero-D-manno-heptose 7-phosphate at the C-1 position to selectively form D-glycero-beta-D-manno-heptose-1,7-bisphosphate. Catalyzes the ADP transfer from ATP to D-glycero-beta-D-manno-heptose 1-phosphate, yielding ADP-D-glycero-beta-D-manno-heptose. The chain is Bifunctional protein HldE from Syntrophotalea carbinolica (strain DSM 2380 / NBRC 103641 / GraBd1) (Pelobacter carbinolicus).